Here is a 614-residue protein sequence, read N- to C-terminus: Autophagy-related protein 22-1 (614 aa).

The tract at residues 1-29 (MQNCTNSPEDQAASVCPPPPQFPGDDTRP) is disordered. Residue N3 is glycosylated (N-linked (GlcNAc...) asparagine). Helical transmembrane passes span 41–61 (YGWA…PITL), 126–146 (TASF…ILII), 160–180 (MLLV…LAVV), and 185–205 (LLGG…FVLL). Residues 229–254 (PTGTSHDSTSTADGPGQTDGTETTSL) form a disordered region. A compositionally biased stretch (polar residues) spans 230-254 (TGTSHDSTSTADGPGQTDGTETTSL). Helical transmembrane passes span 291–311 (GIGI…LVVV), 322–342 (LVLF…AMWL), 383–403 (ILLF…VSGT), 417–437 (AALG…AFSW), 452–472 (IVAC…GFIP), 486–506 (WEMY…SSYC), 523–545 (YALY…GIIT), and 554–574 (AFVF…LVDV).

It belongs to the ATG22 family.

The protein localises to the vacuole membrane. In terms of biological role, vacuolar effluxer which mediate the efflux of amino acids resulting from autophagic degradation. The release of autophagic amino acids allows the maintenance of protein synthesis and viability during nitrogen starvation. The chain is Autophagy-related protein 22-1 (atg22-1) from Aspergillus niger (strain ATCC MYA-4892 / CBS 513.88 / FGSC A1513).